The chain runs to 292 residues: 2-(5''-triphosphoribosyl)-3'-dephosphocoenzyme-A synthase (292 aa).

It belongs to the CitG/MdcB family.

It carries out the reaction 3'-dephospho-CoA + ATP = 2'-(5''-triphospho-alpha-D-ribosyl)-3'-dephospho-CoA + adenine. Catalyzes the formation of 2-(5''-triphosphoribosyl)-3'-dephosphocoenzyme-A, the precursor of the prosthetic group of the holo-acyl carrier protein (gamma chain) of citrate lyase, from ATP and dephospho-CoA. This is 2-(5''-triphosphoribosyl)-3'-dephosphocoenzyme-A synthase from Escherichia coli O127:H6 (strain E2348/69 / EPEC).